The primary structure comprises 967 residues: Phosphoenolpyruvate carboxylase (967 aa).

Ser-10 carries the post-translational modification Phosphoserine. Residues His-171 and Lys-601 contribute to the active site. The segment at Asn-915–Val-936 is disordered. The segment covering Glu-924–Asp-933 has biased composition (basic and acidic residues).

This sequence belongs to the PEPCase type 1 family. As to quaternary structure, homotetramer. Requires Mg(2+) as cofactor.

Its subcellular location is the cytoplasm. The enzyme catalyses oxaloacetate + phosphate = phosphoenolpyruvate + hydrogencarbonate. Its activity is regulated as follows. By light-reversible phosphorylation. Its function is as follows. Through the carboxylation of phosphoenolpyruvate (PEP) it forms oxaloacetate, a four-carbon dicarboxylic acid source for the tricarboxylic acid cycle. In Pisum sativum (Garden pea), this protein is Phosphoenolpyruvate carboxylase.